We begin with the raw amino-acid sequence, 326 residues long: MKAPVRVAVTGAAGQIGYSLLFRIASGDMLGKDQPVILQLLEITPALEALKGVVMELEDCAFPLVSGITTSDKAEEAFKDADIALLVGARPRGPGMERKDLLEANAAIFSAQGKALNDAASRDVKVLVVGNPANTNSLIAQRNAPDLDPRNFTAMTRLDHNRAVAQLANKTGAHNTEIKNMIIWGNHSATQYPDISKTKVKGEAAPGLVERDWYENDFIPTVQQRGAAIIKARGASSAASAASSAIDHIRDWVLGTPEGEWTSMAVPSDGSYGIEKGIIYSYPCVCRNGDYEIVQDLEIDEFSREKMQATEKELVEERDAVEHLLP.

11 to 17 (GAAGQIG) lines the NAD(+) pocket. Substrate is bound by residues R92 and R98. Residues N105, Q112, and 129-131 (VGN) contribute to the NAD(+) site. The substrate site is built by N131 and R162. H187 serves as the catalytic Proton acceptor.

The protein belongs to the LDH/MDH superfamily. MDH type 2 family.

It carries out the reaction (S)-malate + NAD(+) = oxaloacetate + NADH + H(+). Its function is as follows. Catalyzes the reversible oxidation of malate to oxaloacetate. The chain is Malate dehydrogenase from Alkalilimnicola ehrlichii (strain ATCC BAA-1101 / DSM 17681 / MLHE-1).